Consider the following 139-residue polypeptide: Large ribosomal subunit protein uL16 (139 aa).

The span at 1-17 (MLIPRKVKHRKQHHPGR) shows a compositional bias: basic residues. Residues 1 to 24 (MLIPRKVKHRKQHHPGRTGHATGG) form a disordered region.

It belongs to the universal ribosomal protein uL16 family. As to quaternary structure, part of the 50S ribosomal subunit.

In terms of biological role, binds 23S rRNA and is also seen to make contacts with the A and possibly P site tRNAs. The protein is Large ribosomal subunit protein uL16 of Clavibacter michiganensis subsp. michiganensis (strain NCPPB 382).